The primary structure comprises 100 residues: Urease subunit gamma (100 aa).

The protein belongs to the urease gamma subunit family. Heterotrimer of UreA (gamma), UreB (beta) and UreC (alpha) subunits. Three heterotrimers associate to form the active enzyme.

The protein resides in the cytoplasm. The enzyme catalyses urea + 2 H2O + H(+) = hydrogencarbonate + 2 NH4(+). The protein operates within nitrogen metabolism; urea degradation; CO(2) and NH(3) from urea (urease route): step 1/1. The sequence is that of Urease subunit gamma from Lysinibacillus sphaericus (strain C3-41).